The primary structure comprises 426 residues: Dihydroorotase (426 aa).

Zn(2+) is bound by residues His-59 and His-61. Residues His-61–Arg-63 and Asn-93 contribute to the substrate site. Residues Asp-151, His-178, and His-232 each coordinate Zn(2+). Residue Asn-279 participates in substrate binding. Asp-306 lines the Zn(2+) pocket. Residue Asp-306 is part of the active site. Residues His-310 and Phe-324–Gly-325 each bind substrate.

Belongs to the metallo-dependent hydrolases superfamily. DHOase family. Class I DHOase subfamily. The cofactor is Zn(2+).

The catalysed reaction is (S)-dihydroorotate + H2O = N-carbamoyl-L-aspartate + H(+). The protein operates within pyrimidine metabolism; UMP biosynthesis via de novo pathway; (S)-dihydroorotate from bicarbonate: step 3/3. Catalyzes the reversible cyclization of carbamoyl aspartate to dihydroorotate. This Brevibacillus brevis (strain 47 / JCM 6285 / NBRC 100599) protein is Dihydroorotase.